The primary structure comprises 74 residues: UPF0270 protein NT01EI_3666 (74 aa).

Belongs to the UPF0270 family.

In Edwardsiella ictaluri (strain 93-146), this protein is UPF0270 protein NT01EI_3666.